A 579-amino-acid polypeptide reads, in one-letter code: Ribonucleoside-diphosphate reductase small chain (579 aa).

Asp130, Glu160, and His163 together coordinate Fe cation. Tyr167 is a catalytic residue. Glu225, Glu258, and His261 together coordinate Fe cation. Residues 435 to 579 (DMTWTLKDVH…VSVFVDQFYR (145 aa)) form the Fido domain.

The protein belongs to the ribonucleoside diphosphate reductase small chain family. In terms of assembly, heterotetramer composed of a homodimer of the large subunit (R1) and a homodimer of the small subunit (R2). Larger multisubunit protein complex are also active, composed of (R1)n(R2)n. It depends on Fe cation as a cofactor.

The catalysed reaction is a 2'-deoxyribonucleoside 5'-diphosphate + [thioredoxin]-disulfide + H2O = a ribonucleoside 5'-diphosphate + [thioredoxin]-dithiol. Its function is as follows. Ribonucleoside-diphosphate reductase holoenzyme provides the precursors necessary for viral DNA synthesis. Allows virus growth in non-dividing cells. Catalyzes the biosynthesis of deoxyribonucleotides from the corresponding ribonucleotides. The chain is Ribonucleoside-diphosphate reductase small chain from Magallana gigas (Pacific oyster).